Consider the following 375-residue polypeptide: Squamosa promoter-binding-like protein 9 (375 aa).

Disordered stretches follow at residues 1–30 (MEMG…SFSG) and 43–73 (GGGG…QIPR). The span at 18-30 (SGGSSTESSSFSG) shows a compositional bias: low complexity. Residues 71 to 148 (IPRCQVEGCG…AGHNERRRKP (78 aa)) form an SBP-type zinc finger. Positions 74, 79, 96, 99, 115, 118, 122, and 134 each coordinate Zn(2+). The Bipartite nuclear localization signal signature appears at 131–147 (KRSCRRRLAGHNERRRK). 2 disordered regions span residues 252–278 (LLSN…NTWR) and 345–375 (SDHH…NWSL). The segment covering 262-275 (NNNNNNNNNNNNNN) has biased composition (low complexity). The segment covering 345 to 362 (SDHHHQSRRQYMEDENTR) has biased composition (basic and acidic residues). The span at 363-375 (AYDSSSHHTNWSL) shows a compositional bias: polar residues.

Requires Zn(2+) as cofactor.

Its subcellular location is the nucleus. It is found in the cytoplasm. Trans-acting factor that binds specifically to the consensus nucleotide sequence 5'-TNCGTACAA-3'. In Arabidopsis thaliana (Mouse-ear cress), this protein is Squamosa promoter-binding-like protein 9 (SPL9).